A 150-amino-acid polypeptide reads, in one-letter code: D-aminoacyl-tRNA deacylase (150 aa).

The Gly-cisPro motif, important for rejection of L-amino acids signature appears at 138–139 (GP).

It belongs to the DTD family. In terms of assembly, homodimer.

It localises to the cytoplasm. The catalysed reaction is glycyl-tRNA(Ala) + H2O = tRNA(Ala) + glycine + H(+). It carries out the reaction a D-aminoacyl-tRNA + H2O = a tRNA + a D-alpha-amino acid + H(+). Its function is as follows. An aminoacyl-tRNA editing enzyme that deacylates mischarged D-aminoacyl-tRNAs. Also deacylates mischarged glycyl-tRNA(Ala), protecting cells against glycine mischarging by AlaRS. Acts via tRNA-based rather than protein-based catalysis; rejects L-amino acids rather than detecting D-amino acids in the active site. By recycling D-aminoacyl-tRNA to D-amino acids and free tRNA molecules, this enzyme counteracts the toxicity associated with the formation of D-aminoacyl-tRNA entities in vivo and helps enforce protein L-homochirality. This is D-aminoacyl-tRNA deacylase from Chlorobaculum tepidum (strain ATCC 49652 / DSM 12025 / NBRC 103806 / TLS) (Chlorobium tepidum).